A 402-amino-acid polypeptide reads, in one-letter code: CCA-adding enzyme (402 aa).

Glycine 32 and arginine 35 together coordinate ATP. Positions 32 and 35 each coordinate CTP. Residues aspartate 45 and aspartate 47 each contribute to the Mg(2+) site. Arginine 119, aspartate 162, arginine 165, arginine 168, and arginine 171 together coordinate ATP. CTP is bound by residues arginine 119, aspartate 162, arginine 165, arginine 168, and arginine 171.

Belongs to the tRNA nucleotidyltransferase/poly(A) polymerase family. Bacterial CCA-adding enzyme type 3 subfamily. Homodimer. Requires Mg(2+) as cofactor.

It carries out the reaction a tRNA precursor + 2 CTP + ATP = a tRNA with a 3' CCA end + 3 diphosphate. The enzyme catalyses a tRNA with a 3' CCA end + 2 CTP + ATP = a tRNA with a 3' CCACCA end + 3 diphosphate. In terms of biological role, catalyzes the addition and repair of the essential 3'-terminal CCA sequence in tRNAs without using a nucleic acid template. Adds these three nucleotides in the order of C, C, and A to the tRNA nucleotide-73, using CTP and ATP as substrates and producing inorganic pyrophosphate. tRNA 3'-terminal CCA addition is required both for tRNA processing and repair. Also involved in tRNA surveillance by mediating tandem CCA addition to generate a CCACCA at the 3' terminus of unstable tRNAs. While stable tRNAs receive only 3'-terminal CCA, unstable tRNAs are marked with CCACCA and rapidly degraded. The polypeptide is CCA-adding enzyme (Lactococcus lactis subsp. cremoris (strain MG1363)).